A 416-amino-acid polypeptide reads, in one-letter code: Enolase (416 aa).

Residue Q160 coordinates (2R)-2-phosphoglycerate. E204 (proton donor) is an active-site residue. The Mg(2+) site is built by D239, E280, and D306. (2R)-2-phosphoglycerate is bound by residues K331, R360, S361, and K382. K331 functions as the Proton acceptor in the catalytic mechanism.

It belongs to the enolase family. The cofactor is Mg(2+).

The protein localises to the cytoplasm. Its subcellular location is the secreted. The protein resides in the cell surface. The enzyme catalyses (2R)-2-phosphoglycerate = phosphoenolpyruvate + H2O. It functions in the pathway carbohydrate degradation; glycolysis; pyruvate from D-glyceraldehyde 3-phosphate: step 4/5. Functionally, catalyzes the reversible conversion of 2-phosphoglycerate (2-PG) into phosphoenolpyruvate (PEP). It is essential for the degradation of carbohydrates via glycolysis. This Sulfurisphaera tokodaii (strain DSM 16993 / JCM 10545 / NBRC 100140 / 7) (Sulfolobus tokodaii) protein is Enolase.